A 346-amino-acid polypeptide reads, in one-letter code: Blue-light-activated histidine kinase 2 (346 aa).

Residues 8-82 enclose the PAS domain; that stretch reads HDKEAWGRLP…KAIRNCEEVE (75 aa). Cys-55 carries the S-4a-FMN cysteine modification. Residues 79–133 enclose the PAC domain; it reads EEVEETIYNYRADGEGFWNHLLMGPLEDQDEKCRYFVGIQVDMGQSESPDRATEL. The Histidine kinase domain occupies 139–334; that stretch reads EVQHRVKNHL…IVNIDIPLSQ (196 aa). A Phosphohistidine; by autocatalysis modification is found at His-142.

FMN binds covalently to cysteine after exposure to blue light and this bond is spontaneously broken in the dark.

The enzyme catalyses ATP + protein L-histidine = ADP + protein N-phospho-L-histidine.. Photosensitive kinase that is involved in increased bacterial virulence upon exposure to light. The protein is Blue-light-activated histidine kinase 2 of Erythrobacter litoralis (strain HTCC2594).